Reading from the N-terminus, the 217-residue chain is MSFLLHQSRFFTTVNHLRDLPATSQPEICFAGRSNAGKSTAINILCNQKRLAFASKTPGRTQHINYFSVGKADEPTAHLVDLPGYGYAEVPGAAKAHWEALLSTYLQTRSQLRGMILMMDSRRPLTDLDRRMIEWFAPTGKPIHTLLTKCDKLTRQESVNALRATQKGLAEYRTAGYQGELTAQLFSALKRVGIDEAHELIESWLIPSDKGETDAAQ.

Residues 24 to 207 (SQPEICFAGR…HELIESWLIP (184 aa)) enclose the EngB-type G domain. Residues 32–39 (GRSNAGKS), 59–63 (GRTQH), 81–84 (DLPG), 148–151 (TKCD), and 185–188 (LFSA) contribute to the GTP site. Mg(2+)-binding residues include Ser-39 and Thr-61.

Belongs to the TRAFAC class TrmE-Era-EngA-EngB-Septin-like GTPase superfamily. EngB GTPase family. The cofactor is Mg(2+).

In terms of biological role, necessary for normal cell division and for the maintenance of normal septation. The chain is Probable GTP-binding protein EngB from Paraburkholderia phytofirmans (strain DSM 17436 / LMG 22146 / PsJN) (Burkholderia phytofirmans).